Here is an 819-residue protein sequence, read N- to C-terminus: MNEYYQPSEIEAQAQKYWEENKSFNVTEDPTKEKFYCLAMFPYPSGRLHMGHVRNYTISDVISRFHRMQGKNVLHPMGWDAFGLPAENAAIKNNTAPAKWTYSNTDYMRKQLTELGFGFDWSREVTTCKPDYYKWEQWFFTRLYEKGLAYKKVASVNWCPNDQTVLANEQVVDGQCWRCDTAVERKEIPQWFIRITDYAEELLADLDKLPNWPEQVKTMQRNWIGKSQGVEMRFDLANPIAGTTGFDVYTTRPDTLMGVTYVSLAAEHPIAKALAETNPALAAFIQECKVQSVAEADMANMEKKGIDTGIKAKHPITGDEVSVWVANYVLMDYGSGAVMAVPAHDQRDWEFAKKYDLEIKQVIAPEDGSDIDLTKEAFVDKGVLVNSGEYDGLNFNAAFEAISQTLQAANKGKVTTNFRLRDWGVSRQRYWGSPIPIFNLPDGGVIPVPADRLPVLLPEDVQMDGVQSPIKADKEWCKAELNGQAVEHETDTFDTFMESSWYYARYTSPNADSMLDPDKANYWLPVDQYVGGIEHAILHLLYARFFHKLMRDEGLVECDEPFERLLCQGMVLKDGTKMSKSKGNTVDPEDLIKTYGADTVRLFSMFAAPPEQSLEWTDSGVEGAFRFLKKLWKAVASHLEAGSAGEIDANSLDEQQKALRRKTHETISKVSDDYGRRQTFNTAIAAVMELLNEITRSADRSTPNGLAVEREALEAATLLLAPIVPHACHALWQAFGNEVAVLDAPWPTVDEAALVKDTITIVAQVNGKVRAKLDAPANADKDALEKIALADESVLKHIDGKMIRKVIVVPGKLVNIVAN.

The 'HIGH' region signature appears at 42–52 (PYPSGRLHMGH). Positions 577–581 (KMSKS) match the 'KMSKS' region motif. Residue K580 participates in ATP binding.

It belongs to the class-I aminoacyl-tRNA synthetase family.

The protein resides in the cytoplasm. The enzyme catalyses tRNA(Leu) + L-leucine + ATP = L-leucyl-tRNA(Leu) + AMP + diphosphate. The sequence is that of Leucine--tRNA ligase from Saccharophagus degradans (strain 2-40 / ATCC 43961 / DSM 17024).